We begin with the raw amino-acid sequence, 116 residues long: Nascent polypeptide-associated complex protein (116 aa).

The NAC-A/B domain occupies 6–70 (PKQMKDLERM…AREESKQQQK (65 aa)).

This sequence belongs to the NAC-alpha family. Homodimer. Interacts with the ribosome. Binds ribosomal RNA.

In terms of biological role, contacts the emerging nascent chain on the ribosome. This Sulfolobus acidocaldarius (strain ATCC 33909 / DSM 639 / JCM 8929 / NBRC 15157 / NCIMB 11770) protein is Nascent polypeptide-associated complex protein.